The sequence spans 75 residues: Small ribosomal subunit protein bS18 (75 aa).

This sequence belongs to the bacterial ribosomal protein bS18 family. In terms of assembly, part of the 30S ribosomal subunit. Forms a tight heterodimer with protein bS6.

Functionally, binds as a heterodimer with protein bS6 to the central domain of the 16S rRNA, where it helps stabilize the platform of the 30S subunit. The protein is Small ribosomal subunit protein bS18 of Thermotoga maritima (strain ATCC 43589 / DSM 3109 / JCM 10099 / NBRC 100826 / MSB8).